Reading from the N-terminus, the 436-residue chain is Ribulose bisphosphate carboxylase large chain (436 aa).

Substrate-binding residues include Asn-104 and Thr-154. The active-site Proton acceptor is the Lys-156. Substrate is bound at residue Lys-158. Mg(2+)-binding residues include Lys-182, Asp-184, and Glu-185. Lys-182 is modified (N6-carboxylysine). His-275 (proton acceptor) is an active-site residue. Arg-276, His-308, and Ser-360 together coordinate substrate.

This sequence belongs to the RuBisCO large chain family. Type I subfamily. As to quaternary structure, heterohexadecamer of 8 large chains and 8 small chains; disulfide-linked. The disulfide link is formed within the large subunit homodimers. Mg(2+) is required as a cofactor. In terms of processing, the disulfide bond which can form in the large chain dimeric partners within the hexadecamer appears to be associated with oxidative stress and protein turnover.

The protein localises to the plastid. The protein resides in the chloroplast. The enzyme catalyses 2 (2R)-3-phosphoglycerate + 2 H(+) = D-ribulose 1,5-bisphosphate + CO2 + H2O. It catalyses the reaction D-ribulose 1,5-bisphosphate + O2 = 2-phosphoglycolate + (2R)-3-phosphoglycerate + 2 H(+). In terms of biological role, ruBisCO catalyzes two reactions: the carboxylation of D-ribulose 1,5-bisphosphate, the primary event in carbon dioxide fixation, as well as the oxidative fragmentation of the pentose substrate in the photorespiration process. Both reactions occur simultaneously and in competition at the same active site. The polypeptide is Ribulose bisphosphate carboxylase large chain (Euglena geniculata).